Here is a 238-residue protein sequence, read N- to C-terminus: Formate dehydrogenase, cytochrome b556 subunit (238 aa).

Heme b is bound by residues His23 and His62. 4 helical membrane-spanning segments follow: residues 23 to 43 (HWML…FFFP), 60 to 80 (AIHP…ALLY), 120 to 140 (MLFW…IIMW), and 155 to 175 (IAIL…LVHI). Positions 160 and 174 each coordinate heme b.

This sequence belongs to the formate dehydrogenase gamma subunit family. As to quaternary structure, formate dehydrogenase is a membrane-bound complex, formed by subunits alpha, beta and gamma. The cofactor is heme.

The protein resides in the cell membrane. Allows to use formate as major electron donor during anaerobic respiration. Subunit gamma is probably the cytochrome b556(FDO) component of the formate dehydrogenase. This is Formate dehydrogenase, cytochrome b556 subunit (fdxI) from Haemophilus influenzae (strain ATCC 51907 / DSM 11121 / KW20 / Rd).